Reading from the N-terminus, the 354-residue chain is Petrobactin import system permease protein FatC (354 aa).

The next 9 helical transmembrane spans lie at 37–57 (YWIV…GLLV), 77–97 (IVAI…TVAF), 116–136 (LYSA…LINF), 141–161 (SFLF…GWLL), 168–188 (LQLM…VSTF), 214–234 (PAYF…IFAH), 259–279 (VIYT…LIGP), 302–322 (YIFP…YFLM), and 329–349 (QGVV…TIVL).

Belongs to the binding-protein-dependent transport system permease family. FecCD subfamily. As to quaternary structure, the complex is composed of two ATP-binding proteins (FatE), two transmembrane proteins (FatC and FatD) and a solute-binding protein (FpuA).

Its subcellular location is the cell membrane. Its function is as follows. Part of an ABC transporter complex involved in ferric-petrobactin uptake. Probably responsible for the translocation of the substrate across the membrane. The polypeptide is Petrobactin import system permease protein FatC (Bacillus anthracis).